Here is a 349-residue protein sequence, read N- to C-terminus: Phosphoribosylformylglycinamidine cyclo-ligase (349 aa).

It belongs to the AIR synthase family.

It is found in the cytoplasm. It catalyses the reaction 2-formamido-N(1)-(5-O-phospho-beta-D-ribosyl)acetamidine + ATP = 5-amino-1-(5-phospho-beta-D-ribosyl)imidazole + ADP + phosphate + H(+). It functions in the pathway purine metabolism; IMP biosynthesis via de novo pathway; 5-amino-1-(5-phospho-D-ribosyl)imidazole from N(2)-formyl-N(1)-(5-phospho-D-ribosyl)glycinamide: step 2/2. The sequence is that of Phosphoribosylformylglycinamidine cyclo-ligase from Psychrobacter cryohalolentis (strain ATCC BAA-1226 / DSM 17306 / VKM B-2378 / K5).